We begin with the raw amino-acid sequence, 495 residues long: Acetyl-coenzyme A carboxylase carboxyl transferase subunit beta, chloroplastic (495 aa).

Residues 188-208 are disordered; the sequence is SRNSSENEGSSRRTRTKGSDL. A CoA carboxyltransferase N-terminal domain is found at 226–495; that stretch reads LWVQCENCYG…PLNQKSSKIK (270 aa). Zn(2+) is bound by residues cysteine 230, cysteine 233, cysteine 249, and cysteine 252. The segment at 230-252 adopts a C4-type zinc-finger fold; that stretch reads CENCYGLNYKKFFKSKMNICEQC.

This sequence belongs to the AccD/PCCB family. Acetyl-CoA carboxylase is a heterohexamer composed of biotin carboxyl carrier protein, biotin carboxylase and 2 subunits each of ACCase subunit alpha and ACCase plastid-coded subunit beta (accD). The cofactor is Zn(2+).

The protein localises to the plastid. Its subcellular location is the chloroplast stroma. It catalyses the reaction N(6)-carboxybiotinyl-L-lysyl-[protein] + acetyl-CoA = N(6)-biotinyl-L-lysyl-[protein] + malonyl-CoA. Its pathway is lipid metabolism; malonyl-CoA biosynthesis; malonyl-CoA from acetyl-CoA: step 1/1. Functionally, component of the acetyl coenzyme A carboxylase (ACC) complex. Biotin carboxylase (BC) catalyzes the carboxylation of biotin on its carrier protein (BCCP) and then the CO(2) group is transferred by the transcarboxylase to acetyl-CoA to form malonyl-CoA. The protein is Acetyl-coenzyme A carboxylase carboxyl transferase subunit beta, chloroplastic of Nicotiana tomentosiformis (Tobacco).